A 67-amino-acid chain; its full sequence is Beta-defensin 36 (67 aa).

An N-terminal signal peptide occupies residues 1–22 (MKLLLLTLAALLLVSQLTPGDA). 3 cysteine pairs are disulfide-bonded: C25-C52, C32-C46, and C36-C53.

Belongs to the beta-defensin family.

The protein resides in the secreted. Its function is as follows. Has antibacterial activity. This chain is Beta-defensin 36 (Defb36), found in Mus musculus (Mouse).